The following is a 499-amino-acid chain: Hepatic triacylglycerol lipase (499 aa).

An N-terminal signal peptide occupies residues 1 to 22 (MDTSPLCFSILLVLCIFIQSSA). N-linked (GlcNAc...) asparagine glycans are attached at residues asparagine 42 and asparagine 78. Serine 168 (nucleophile) is an active-site residue. Residue aspartate 194 is the Charge relay system of the active site. The tract at residues 254-277 (CHFLELYRHIAQHGFNAITQTIKC) is essential for determining substrate specificity. Residue histidine 279 is the Charge relay system of the active site. Residues 352 to 486 (YHYQFKIQFI…RPTQEKIFVK (135 aa)) enclose the PLAT domain. N-linked (GlcNAc...) asparagine glycans are attached at residues asparagine 362 and asparagine 397.

This sequence belongs to the AB hydrolase superfamily. Lipase family. As to quaternary structure, homodimer.

It is found in the secreted. The enzyme catalyses a triacylglycerol + H2O = a diacylglycerol + a fatty acid + H(+). It catalyses the reaction a 1-acyl-sn-glycero-3-phosphocholine + H2O = sn-glycerol 3-phosphocholine + a fatty acid + H(+). The catalysed reaction is a 1,2-diacyl-sn-glycero-3-phosphocholine + H2O = a 2-acyl-sn-glycero-3-phosphocholine + a fatty acid + H(+). It carries out the reaction 1,2,3-tri-(9Z-octadecenoyl)-glycerol + H2O = di-(9Z)-octadecenoylglycerol + (9Z)-octadecenoate + H(+). The enzyme catalyses 1,2-di-(9Z-octadecenoyl)-sn-glycero-3-phosphocholine + H2O = (9Z-octadecenoyl)-sn-glycero-3-phosphocholine + (9Z)-octadecenoate + H(+). It catalyses the reaction 1,2,3-tributanoylglycerol + H2O = dibutanoylglycerol + butanoate + H(+). The catalysed reaction is 1,2-dihexadecanoyl-sn-glycero-3-phosphocholine + H2O = hexadecanoyl-sn-glycero-3-phosphocholine + hexadecanoate + H(+). It carries out the reaction 1,2-di-(9Z-octadecenoyl)-sn-glycerol + H2O = 2-(9Z-octadecenoyl)-glycerol + (9Z)-octadecenoate + H(+). The enzyme catalyses 1,2,3-tri-(9Z-octadecenoyl)-glycerol + H2O = 2,3-di-(9Z)-octadecenoyl-sn-glycerol + (9Z)-octadecenoate + H(+). It catalyses the reaction 1-(9Z-octadecenoyl)-sn-glycero-3-phospho-L-serine + H2O = sn-glycero-3-phospho-L-serine + (9Z)-octadecenoate + H(+). The catalysed reaction is 1-hexadecanoyl-sn-glycero-3-phosphocholine + H2O = sn-glycerol 3-phosphocholine + hexadecanoate + H(+). It carries out the reaction 1,3-di-(9Z-octadecenoyl)-glycerol + H2O = 3-(9Z-octadecenoyl)-sn-glycerol + (9Z)-octadecenoate + H(+). With respect to regulation, phospholipase A1 and triacylglycerol lipase are inhibited by sphingomyelin. Its function is as follows. Catalyzes the hydrolysis of triglycerides and phospholipids present in circulating plasma lipoproteins, including chylomicrons, intermediate density lipoproteins (IDL), low density lipoproteins (LDL) of large size and high density lipoproteins (HDL), releasing free fatty acids (FFA) and smaller lipoprotein particles. Also exhibits lysophospholipase activity. Can hydrolyze both neutral lipid and phospholipid substrates but shows a greater binding affinity for neutral lipid substrates than phospholipid substrates. In native LDL, preferentially hydrolyzes the phosphatidylcholine species containing polyunsaturated fatty acids at sn-2 position. This is Hepatic triacylglycerol lipase (LIPC) from Homo sapiens (Human).